Here is a 441-residue protein sequence, read N- to C-terminus: L-seryl-tRNA(Sec) selenium transferase (441 aa).

Lys283 bears the N6-(pyridoxal phosphate)lysine mark.

Belongs to the SelA family. Pyridoxal 5'-phosphate is required as a cofactor.

The protein localises to the cytoplasm. It catalyses the reaction L-seryl-tRNA(Sec) + selenophosphate + H(+) = L-selenocysteinyl-tRNA(Sec) + phosphate. Its pathway is aminoacyl-tRNA biosynthesis; selenocysteinyl-tRNA(Sec) biosynthesis; selenocysteinyl-tRNA(Sec) from L-seryl-tRNA(Sec) (bacterial route): step 1/1. Functionally, converts seryl-tRNA(Sec) to selenocysteinyl-tRNA(Sec) required for selenoprotein biosynthesis. This Campylobacter concisus (strain 13826) protein is L-seryl-tRNA(Sec) selenium transferase.